A 195-amino-acid chain; its full sequence is TM2 domain-containing protein C41D11.9 (195 aa).

The signal sequence occupies residues 1 to 20 (MLHKILFLICLASFIPTIGS). The Extracellular segment spans residues 21–136 (ISGTKDVKSK…NWSSGYSWTK (116 aa)). N-linked (GlcNAc...) asparagine glycosylation is found at N55, N93, and N127. The TM2 domain maps to 131 to 179 (GYSWTKTMILSVVLGGFGADRFYLGLWKSAIGKLFSFGGLGVWTLVDVV). The helical transmembrane segment at 137–157 (TMILSVVLGGFGADRFYLGLW) threads the bilayer. At 158 to 163 (KSAIGK) the chain is on the cytoplasmic side. The chain crosses the membrane as a helical span at residues 164–184 (LFSFGGLGVWTLVDVVLIAVG). Topologically, residues 185-195 (YIKPYDGSMYI) are extracellular.

Belongs to the TM2 family.

It is found in the membrane. This Caenorhabditis elegans protein is TM2 domain-containing protein C41D11.9.